Here is a 779-residue protein sequence, read N- to C-terminus: GATOR2 complex protein WDR24 (779 aa).

WD repeat units follow at residues 66–106, 112–152, 155–195, 199–239, 243–285, and 289–332; these read SLNF…RNKQ, EHKR…SVST, GQSE…RYER, AHTG…VKEI, QTFA…IPFA, and EHKD…VDRA. Disordered stretches follow at residues 506 to 526 and 570 to 590; these read LETN…EGQA and DHPS…VSGS. Residues 707 to 729 form a C4-type zinc finger; the sequence is NCSNCKRPMSNKGWICDRCHQCA. Residues Cys-708, Cys-711, Cys-722, Cys-725, Cys-732, Cys-735, Cys-746, Cys-749, His-751, His-754, His-757, Cys-768, Cys-772, His-774, and Cys-776 each coordinate Zn(2+). The RING-type; atypical zinc-finger motif lies at 730–779; the sequence is SVCAVCHHVVKGLFVWCQGCSHGGHLEHVMEWLKQSKHCPAGCGHLCEYT.

This sequence belongs to the WD repeat WDR24 family. Component of the GATOR2 subcomplex, composed of MIOS, SEC13, SEH1L, WDR24 and WDR59. The GATOR2 complex interacts with CASTOR1 and CASTOR2; the interaction is negatively regulated by arginine. The GATOR2 complex interacts with SESN1, SESN2 and SESN3; the interaction is negatively regulated by amino acids.

Its subcellular location is the lysosome membrane. It catalyses the reaction S-ubiquitinyl-[E2 ubiquitin-conjugating enzyme]-L-cysteine + [acceptor protein]-L-lysine = [E2 ubiquitin-conjugating enzyme]-L-cysteine + N(6)-ubiquitinyl-[acceptor protein]-L-lysine.. It functions in the pathway protein modification; protein ubiquitination. With respect to regulation, the GATOR2 complex is negatively regulated by the upstream amino acid sensors CASTOR1 and SESN2, which sequester the GATOR2 complex in absence of amino acids. In the presence of abundant amino acids, GATOR2 is released from CASTOR1 and SESN2 and activated. Its function is as follows. Catalytic component of the GATOR2 complex, a multiprotein complex that acts as an activator of the amino acid-sensing branch of the mTORC1 signaling pathway. The GATOR2 complex indirectly activates mTORC1 through the inhibition of the GATOR1 subcomplex. GATOR2 probably acts as an E3 ubiquitin-protein ligase toward GATOR1. In the presence of abundant amino acids, the GATOR2 complex mediates ubiquitination of the NPRL2 core component of the GATOR1 complex, leading to GATOR1 inactivation. In the absence of amino acids, GATOR2 is inhibited, activating the GATOR1 complex. In addition to its role in regulation of the mTORC1 complex, promotes the acidification of lysosomes and facilitates autophagic flux. Within the GATOR2 complex, WDR24 constitutes the catalytic subunit that mediates 'Lys-6'-linked ubiquitination of NPRL2. This Danio rerio (Zebrafish) protein is GATOR2 complex protein WDR24.